The primary structure comprises 917 residues: DNA repair endonuclease XPF (917 aa).

The tract at residues 1–457 (MEPGLSGERR…EVWVNVRKGD (457 aa)) is helicase-like. Leucine-zipper stretches follow at residues 233–254 (LNACLKELKCHNPSLEVEDLSL) and 270–298 (LDPLWHQLGAKTKSLVQDLKILRTLLQYL). Lys-289 bears the N6-acetyllysine mark. Over residues 454-479 (RKGDGPKRTTKSDKRPKAAPNKERAS) the composition is skewed to basic and acidic residues. Disordered regions lie at residues 454–524 (RKGD…SSPE) and 643–681 (VPEEREGRDETNLDLARGSAALDAPTDTRKAGGQEQNGT). Residues 487-492 (KRKKQE) carry the Nuclear localization signal motif. The segment covering 507-516 (EDKALEEDLC) has biased composition (basic and acidic residues). Ser-522 carries the post-translational modification Phosphoserine. Positions 643–653 (VPEEREGRDET) are enriched in basic and acidic residues. Positions 659–814 (RGSAALDAPT…PSPHATAELF (156 aa)) are nuclease. The ERCC4 domain maps to 684-764 (SIVVDMREFR…RPVLLIEFDP (81 aa)). Ser-765 carries the phosphoserine modification. Residues 838–906 (TLPESDRYNP…QLHDFLHTAY (69 aa)) are hhH2, dimerization with ERCC1. Residue Lys-912 is modified to N6-acetyllysine.

The protein belongs to the XPF family. In terms of assembly, heterodimer composed of ERCC1 and ERCC4/XPF. Interacts with SLX4/BTBD12; this interaction is direct and links the ERCC1-ERCC4/XPF complex to SLX4, which may coordinate the action of the structure-specific endonuclease during DNA repair. Requires Mg(2+) as cofactor. In terms of processing, acetylation at Lys-912 by KAT5 promotes interaction with ERCC1 by disrupting a salt bridge between Asp-908 and Lys-912, thereby exposing a second binding site for ERCC1. Deacetylated by SIRT1.

The protein localises to the nucleus. It is found in the chromosome. In terms of biological role, catalytic component of a structure-specific DNA repair endonuclease responsible for the 5-prime incision during DNA repair, and which is essential for nucleotide excision repair (NER) and interstrand cross-link (ICL) repair. In Mus musculus (Mouse), this protein is DNA repair endonuclease XPF.